The sequence spans 492 residues: Glutamyl-tRNA(Gln) amidotransferase subunit A (492 aa).

Residues lysine 80 and serine 155 each act as charge relay system in the active site. Catalysis depends on serine 179, which acts as the Acyl-ester intermediate.

The protein belongs to the amidase family. GatA subfamily. In terms of assembly, heterotrimer of A, B and C subunits.

It carries out the reaction L-glutamyl-tRNA(Gln) + L-glutamine + ATP + H2O = L-glutaminyl-tRNA(Gln) + L-glutamate + ADP + phosphate + H(+). Its function is as follows. Allows the formation of correctly charged Gln-tRNA(Gln) through the transamidation of misacylated Glu-tRNA(Gln) in organisms which lack glutaminyl-tRNA synthetase. The reaction takes place in the presence of glutamine and ATP through an activated gamma-phospho-Glu-tRNA(Gln). The chain is Glutamyl-tRNA(Gln) amidotransferase subunit A from Mycobacteroides abscessus (strain ATCC 19977 / DSM 44196 / CCUG 20993 / CIP 104536 / JCM 13569 / NCTC 13031 / TMC 1543 / L948) (Mycobacterium abscessus).